The chain runs to 183 residues: Archaemetzincin (183 aa).

His-132 is a binding site for Zn(2+). Residue Glu-133 is the Proton acceptor of the active site. Positions 136, 142, 143, 148, 167, and 170 each coordinate Zn(2+).

Belongs to the peptidase M54 family. In terms of assembly, monomer. Zn(2+) is required as a cofactor.

In terms of biological role, probable zinc metalloprotease whose natural substrate is unknown. The protein is Archaemetzincin of Aeropyrum pernix (strain ATCC 700893 / DSM 11879 / JCM 9820 / NBRC 100138 / K1).